The following is a 312-amino-acid chain: Thioredoxin reductase (312 aa).

33-43 (EGFFSGIAGGQ) serves as a coordination point for FAD. Cysteine 138 and cysteine 141 are disulfide-bonded. An FAD-binding site is contributed by 283–292 (DVQDKYYRQA).

It belongs to the class-II pyridine nucleotide-disulfide oxidoreductase family. As to quaternary structure, homodimer. FAD serves as cofactor.

It localises to the cytoplasm. It catalyses the reaction [thioredoxin]-dithiol + NADP(+) = [thioredoxin]-disulfide + NADPH + H(+). This Chlamydia trachomatis serovar D (strain ATCC VR-885 / DSM 19411 / UW-3/Cx) protein is Thioredoxin reductase (trxB).